A 119-amino-acid polypeptide reads, in one-letter code: ARRKRAATHPPVATAVVAAILGLKDRKGSSMVAIKKYLAANYNVDVARLGPFIRRFVRKAVAEGMLVQNKGSFRVNKTALPKKKKAAKKPKAKKVKKPKSAAKKKTNRARAPKTKKNRN.

The H15 domain maps to 8–77; it reads THPPVATAVV…QNKGSFRVNK (70 aa). The interval 76–119 is disordered; the sequence is NKTALPKKKKAAKKPKAKKVKKPKSAAKKKTNRARAPKTKKNRN. Positions 80–119 are enriched in basic residues; it reads LPKKKKAAKKPKAKKVKKPKSAAKKKTNRARAPKTKKNRN.

This sequence belongs to the histone H1/H5 family.

The protein resides in the nucleus. It is found in the chromosome. Functionally, histones H1 are necessary for the condensation of nucleosome chains into higher-order structures. This Platynereis dumerilii (Dumeril's clam worm) protein is Histone H1B, sperm.